Reading from the N-terminus, the 170-residue chain is ATP synthase subunit b (170 aa).

A helical transmembrane segment spans residues 25–45 (LIPNGTFFAVLIIFLIVLGVI). The segment at 121–147 (EVAQTLTQADQQLSAQGDQVRSGLESS) is disordered. A compositionally biased stretch (polar residues) spans 122 to 139 (VAQTLTQADQQLSAQGDQ).

It belongs to the ATPase B chain family. In terms of assembly, F-type ATPases have 2 components, F(1) - the catalytic core - and F(0) - the membrane proton channel. F(1) has five subunits: alpha(3), beta(3), gamma(1), delta(1), epsilon(1). F(0) has three main subunits: a(1), b(2) and c(10-14). The alpha and beta chains form an alternating ring which encloses part of the gamma chain. F(1) is attached to F(0) by a central stalk formed by the gamma and epsilon chains, while a peripheral stalk is formed by the delta and b chains.

It localises to the cell membrane. F(1)F(0) ATP synthase produces ATP from ADP in the presence of a proton or sodium gradient. F-type ATPases consist of two structural domains, F(1) containing the extramembraneous catalytic core and F(0) containing the membrane proton channel, linked together by a central stalk and a peripheral stalk. During catalysis, ATP synthesis in the catalytic domain of F(1) is coupled via a rotary mechanism of the central stalk subunits to proton translocation. In terms of biological role, component of the F(0) channel, it forms part of the peripheral stalk, linking F(1) to F(0). The polypeptide is ATP synthase subunit b (Mycolicibacterium smegmatis (strain ATCC 700084 / mc(2)155) (Mycobacterium smegmatis)).